The primary structure comprises 476 residues: Bifunctional protein GlmU (476 aa).

The interval 1-235 (MTALDIIIMA…ALQVAGVNSP (235 aa)) is pyrophosphorylase. Residues Lys-23, Gln-81, 86–87 (GT), 108–110 (SGD), Gly-145, Glu-160, and Asn-233 contribute to the UDP-N-acetyl-alpha-D-glucosamine site. Asp-110 serves as a coordination point for Mg(2+). Asn-233 is a Mg(2+) binding site. Residues 236-256 (AQLAELERAHQRAQAAALMEQ) are linker. The segment at 257 to 476 (GVRLADPARF…WKRPAKQAKG (220 aa)) is N-acetyltransferase. UDP-N-acetyl-alpha-D-glucosamine contacts are provided by Arg-351 and Lys-369. Residue His-381 is the Proton acceptor of the active site. Positions 384 and 395 each coordinate UDP-N-acetyl-alpha-D-glucosamine. Residues Ala-398, 404 to 405 (NY), Ser-423, Gly-441, and Arg-458 each bind acetyl-CoA.

This sequence in the N-terminal section; belongs to the N-acetylglucosamine-1-phosphate uridyltransferase family. In the C-terminal section; belongs to the transferase hexapeptide repeat family. In terms of assembly, homotrimer. The cofactor is Mg(2+).

Its subcellular location is the cytoplasm. It catalyses the reaction alpha-D-glucosamine 1-phosphate + acetyl-CoA = N-acetyl-alpha-D-glucosamine 1-phosphate + CoA + H(+). The enzyme catalyses N-acetyl-alpha-D-glucosamine 1-phosphate + UTP + H(+) = UDP-N-acetyl-alpha-D-glucosamine + diphosphate. It functions in the pathway nucleotide-sugar biosynthesis; UDP-N-acetyl-alpha-D-glucosamine biosynthesis; N-acetyl-alpha-D-glucosamine 1-phosphate from alpha-D-glucosamine 6-phosphate (route II): step 2/2. Its pathway is nucleotide-sugar biosynthesis; UDP-N-acetyl-alpha-D-glucosamine biosynthesis; UDP-N-acetyl-alpha-D-glucosamine from N-acetyl-alpha-D-glucosamine 1-phosphate: step 1/1. The protein operates within bacterial outer membrane biogenesis; LPS lipid A biosynthesis. Catalyzes the last two sequential reactions in the de novo biosynthetic pathway for UDP-N-acetylglucosamine (UDP-GlcNAc). The C-terminal domain catalyzes the transfer of acetyl group from acetyl coenzyme A to glucosamine-1-phosphate (GlcN-1-P) to produce N-acetylglucosamine-1-phosphate (GlcNAc-1-P), which is converted into UDP-GlcNAc by the transfer of uridine 5-monophosphate (from uridine 5-triphosphate), a reaction catalyzed by the N-terminal domain. This is Bifunctional protein GlmU from Acidovorax ebreus (strain TPSY) (Diaphorobacter sp. (strain TPSY)).